Reading from the N-terminus, the 131-residue chain is Lymphocyte antigen 6C1 (131 aa).

The first 26 residues, 1 to 26 (MDTSHTTKSCVLILLVALLCAERAQG), serve as a signal peptide directing secretion. A UPAR/Ly6 domain is found at 27-115 (LQCYECYGVP…PTAGSTWTMA (89 aa)). 5 disulfide bridges follow: cysteine 29/cysteine 53, cysteine 32/cysteine 41, cysteine 46/cysteine 74, cysteine 78/cysteine 95, and cysteine 96/cysteine 101. Glycine 109 is lipidated: GPI-anchor amidated glycine. The propeptide at 110-131 (STWTMAGVLLFSLSSVVLQTLL) is removed in mature form.

The protein resides in the cell membrane. The protein is Lymphocyte antigen 6C1 (Ly6c1) of Mus musculus (Mouse).